Here is a 112-residue protein sequence, read N- to C-terminus: MEAYEQVQKGPLKLKGVAELGVTKRKKKKKDKDKAKMLEAMGTSKKNEEEKRRCLDKRTPAQAAFEKMQEKRQMERILKKASKTHKQRVEDFNRHLDTLTEHYDIPKVSWTK.

The interval Thr23–Asp56 is disordered. A compositionally biased stretch (basic and acidic residues) spans Lys45–Asp56.

This sequence belongs to the FAM32 family.

The protein resides in the nucleus. May induce G2 arrest and apoptosis. May also increase cell sensitivity to apoptotic stimuli. This Rattus norvegicus (Rat) protein is Protein FAM32A (Fam32a).